A 218-amino-acid polypeptide reads, in one-letter code: Ras-related protein R-Ras (218 aa).

The tract at residues 1 to 30 (MSSGAASGTGRGRPRGGGPGPRDPPPGETH) is disordered. Over residues 7-20 (SGTGRGRPRGGGPG) the composition is skewed to gly residues. 36–44 (GGGGVGKSA) contacts GTP. The short motif at 58–66 (YDPTIEDSY) is the Effector region element. GTP contacts are provided by residues 83–87 (DTAGQ), 142–145 (NKAD), and 172–174 (SAK). Cysteine 215 carries the cysteine methyl ester modification. The S-geranylgeranyl cysteine moiety is linked to residue cysteine 215. A propeptide spans 216–218 (VLL) (removed in mature form).

The protein belongs to the small GTPase superfamily. Ras family. In terms of assembly, interacts with PLCE1. Interacts (active GTP-bound form preferentially) with RGS14. Interacts with OSBPL3. Interacts with ZDHHC19. S-palmitoylated by ZDHHC19, leading to increased association with membranes and with rafts/caveolae as well as enhanced cell viability.

Its subcellular location is the cell membrane. The catalysed reaction is GTP + H2O = GDP + phosphate + H(+). Its function is as follows. GTP-binding protein with GTPase activity, likely involved in the regulation of MAPK signaling pathway and thereby controlling multiple cellular processes. Regulates the organization of the actin cytoskeleton. With OSPBL3, modulates integrin beta-1 (ITGB1) activity. The sequence is that of Ras-related protein R-Ras (Rras) from Mus musculus (Mouse).